A 365-amino-acid polypeptide reads, in one-letter code: Caffeic acid 3-O-methyltransferase (365 aa).

Position 131 (Asn131) interacts with (E)-ferulate. S-adenosyl-L-homocysteine contacts are provided by Gly208, Asp231, Asp251, Met252, Met264, and Lys265. Residue His269 is the Proton acceptor of the active site. Residue Asp270 participates in (E)-5-hydroxyferulate binding. Active-site residues include Glu297 and Glu329.

It belongs to the class I-like SAM-binding methyltransferase superfamily. Cation-independent O-methyltransferase family. COMT subfamily. As to quaternary structure, homodimer. More abundant in roots and stems.

It carries out the reaction (E)-caffeate + S-adenosyl-L-methionine = (E)-ferulate + S-adenosyl-L-homocysteine + H(+). The catalysed reaction is (E)-5-hydroxyferulate + S-adenosyl-L-methionine = (E)-sinapate + S-adenosyl-L-homocysteine + H(+). The protein operates within aromatic compound metabolism; phenylpropanoid biosynthesis. In terms of biological role, catalyzes the conversion of caffeic acid to ferulic acid and of 5-hydroxyferulic acid to sinapic acid. The resulting products may subsequently be converted to the corresponding alcohols that are incorporated into lignins. In Medicago sativa (Alfalfa), this protein is Caffeic acid 3-O-methyltransferase.